Here is an 879-residue protein sequence, read N- to C-terminus: DNA mismatch repair protein MutS (879 aa).

ATP is bound at residue 639–646 (GPNMGGKS).

This sequence belongs to the DNA mismatch repair MutS family.

Its function is as follows. This protein is involved in the repair of mismatches in DNA. It is possible that it carries out the mismatch recognition step. This protein has a weak ATPase activity. The protein is DNA mismatch repair protein MutS of Aromatoleum aromaticum (strain DSM 19018 / LMG 30748 / EbN1) (Azoarcus sp. (strain EbN1)).